The sequence spans 216 residues: MDKFTVHSGLVAPLDRENVDTDAIIPKQFLKSIKRTGFGPNLFDEWRYKDVGEPGMDNSKRPLNPDFVLNQPRYQGASILLARRNFGCGSSREHAPWALSQYGFRAVIAPSFADIFFNNCYKNGLLPVVLSEQQIDHLFNETNAFNGYKLTIDLDKQVVLTPSGQGYEFDIAPFRKYCMLNGFDDIGLTLRHADKIKSYEAERVAKMPWLNNRVVG.

It belongs to the LeuD family. LeuD type 1 subfamily. As to quaternary structure, heterodimer of LeuC and LeuD.

The catalysed reaction is (2R,3S)-3-isopropylmalate = (2S)-2-isopropylmalate. It functions in the pathway amino-acid biosynthesis; L-leucine biosynthesis; L-leucine from 3-methyl-2-oxobutanoate: step 2/4. Functionally, catalyzes the isomerization between 2-isopropylmalate and 3-isopropylmalate, via the formation of 2-isopropylmaleate. This Cupriavidus pinatubonensis (strain JMP 134 / LMG 1197) (Cupriavidus necator (strain JMP 134)) protein is 3-isopropylmalate dehydratase small subunit.